The following is a 319-amino-acid chain: Glutathione synthetase (319 aa).

Positions 129-314 (KLAILNFSRF…VAAMFADAVA (186 aa)) constitute an ATP-grasp domain. Residue 155–211 (LKEHGDIIIKPLDGMGGMGIFRLTEKDPNIGSILETLMQLDSRTIMAQRYIPEIVHG) coordinates ATP. Mg(2+) is bound by residues Glu285 and Asn287.

This sequence belongs to the prokaryotic GSH synthase family. Mg(2+) is required as a cofactor. Requires Mn(2+) as cofactor.

It carries out the reaction gamma-L-glutamyl-L-cysteine + glycine + ATP = glutathione + ADP + phosphate + H(+). It participates in sulfur metabolism; glutathione biosynthesis; glutathione from L-cysteine and L-glutamate: step 2/2. The sequence is that of Glutathione synthetase from Neisseria meningitidis serogroup B (strain ATCC BAA-335 / MC58).